Consider the following 274-residue polypeptide: MQSLQQNIETAFEQRAAITPANVDATTRDAVNQVIAALDSGTLRVAEKINGEWVTHQWLKKAVLLSFRIADNQLIEGGETRFFDKVPMKFAGWDSERFQREGFRVVPPASVRQGAYIARNTVLMPSYVNIGAYVDESTMVDTWATVGSCAQIGKNVHLSGGAGIGGVLEPLQANPTIIEDNCFIGARSEMVEGVIVEEGSVISMGVFIGQSTKIYDRETGEVHYGRVPAGSVVVSGNLPSKDGRYSLYCAVIVKKVDAKTRGKVGINELLRTID.

Substrate is bound by residues Arg104 and Asp141.

The protein belongs to the transferase hexapeptide repeat family. As to quaternary structure, homotrimer.

It localises to the cytoplasm. It carries out the reaction (S)-2,3,4,5-tetrahydrodipicolinate + succinyl-CoA + H2O = (S)-2-succinylamino-6-oxoheptanedioate + CoA. Its pathway is amino-acid biosynthesis; L-lysine biosynthesis via DAP pathway; LL-2,6-diaminopimelate from (S)-tetrahydrodipicolinate (succinylase route): step 1/3. The protein is 2,3,4,5-tetrahydropyridine-2,6-dicarboxylate N-succinyltransferase of Sodalis glossinidius (strain morsitans).